A 255-amino-acid polypeptide reads, in one-letter code: MLMVISPAKSLDFTAPDQVLPLTTPELKPQIAELAKVTRKLTAADLRRLMHISEKLAALNHERFQHFDPQVEEGLQAVIAFNGDVYAGLNARELDRPALEWAQDHLRILSGLYGVLRPFDALQAYRLEMGARLKTKRGANLYDFWGETIAKTLNAAGKDHADPTLVNLASQEYFGAVDAKALKLPVVTCHFKEEKGNTLRVLGFFAKKARGRMARFAIDNRIDKAEGLKGFNLDGYEYRADLSTPADWVFARLQP.

The protein belongs to the UPF0246 family.

The protein is UPF0246 protein Caul_4480 of Caulobacter sp. (strain K31).